The primary structure comprises 178 residues: Adenine phosphoribosyltransferase (178 aa).

This sequence belongs to the purine/pyrimidine phosphoribosyltransferase family. In terms of assembly, homodimer.

The protein localises to the cytoplasm. It carries out the reaction AMP + diphosphate = 5-phospho-alpha-D-ribose 1-diphosphate + adenine. It functions in the pathway purine metabolism; AMP biosynthesis via salvage pathway; AMP from adenine: step 1/1. Its function is as follows. Catalyzes a salvage reaction resulting in the formation of AMP, that is energically less costly than de novo synthesis. The protein is Adenine phosphoribosyltransferase of Streptomyces clavuligerus.